Reading from the N-terminus, the 527-residue chain is Transcriptional regulator ATRX (527 aa).

The interval 1 to 527 (GRSVVEFGDM…RSYKQKKKRR (527 aa)) is disordered. The span at 14 to 23 (RQQSAVSSAG) shows a compositional bias: polar residues. Residues 27–46 (PSGKEENVHSPEDKRVTKSK) show a composition bias toward basic and acidic residues. The segment covering 47 to 59 (EKSKHLRTRTGRK) has biased composition (basic residues). Positions 60-84 (VKSDVTDRFRKKEQSSESSEGEKKQ) are enriched in basic and acidic residues. Residues S62 and S74 each carry the phosphoserine modification. Residues 85 to 94 (GRQRTGTRGK) show a composition bias toward basic residues. Composition is skewed to basic and acidic residues over residues 95–122 (KSTD…KLPE), 136–145 (NKNDTTDEAK), 152–194 (DKSC…EKKQ), and 204–250 (KRPE…KEVK). Residue K105 forms a Glycyl lysine isopeptide (Lys-Gly) (interchain with G-Cter in SUMO2) linkage. Phosphoserine is present on residues S112, S113, and S114. The residue at position 162 (S162) is a Phosphoserine. Position 184 is a citrulline (R184). A compositionally biased stretch (basic residues) spans 267–297 (KQKKQRMSAKKKNSNTKERKRKSLRATTTKR). The interaction with DAXX stretch occupies residues 290–427 (LRATTTKRKQ…SNQVNSESDS (138 aa)). S345, S346, and S354 each carry phosphoserine. A compositionally biased stretch (basic and acidic residues) spans 368-382 (PENRIAKKMLLEEIK). Residues 387–398 (SDEDGSSDDEPK) show a composition bias toward acidic residues. Residues 399–410 (EGEKKRIGKQSE) show a composition bias toward basic and acidic residues. A phosphoserine mark is found at S423, S425, and S427. Residues 435–446 (PRYRHRLLRHKL) show a composition bias toward basic residues. Residues S449 and S453 each carry the phosphoserine modification. 2 stretches are compositionally biased toward basic and acidic residues: residues 454–469 (GGEK…ETKG) and 509–518 (KKAELEENQR).

Belongs to the SNF2/RAD54 helicase family. As to quaternary structure, interacts with DAXX to form the chromatin remodeling complex ATRX:DAXX. Probably binds EZH2. Binds annexin V in a calcium and phosphatidylcholine/phosphatidylserine-dependent manner. Interacts directly with CBX5 via the PxVxL motif. Interacts with RAD50, MRE11 and NBN; indicative for an association with the MRN complex. Interacts with histone MACROH2A1. Interacts with histone H3 peptides methylated at 'Lys-10' with preferences H3K9me3 &gt; H3K9me2 &gt; H3K9me1. Interacts with histone H3 peptides unmethylated at 'Lys-5' (H3K4me0). Interacts with MECP2, SMC1 and SMC3. Interacts with SETDB1, TRIM28 and ZNF274. Post-translationally, citrullinated by PADI4.

It localises to the nucleus. The protein localises to the chromosome. The protein resides in the telomere. Its subcellular location is the PML body. It carries out the reaction ATP + H2O = ADP + phosphate + H(+). In terms of biological role, involved in transcriptional regulation and chromatin remodeling. Facilitates DNA replication in multiple cellular environments and is required for efficient replication of a subset of genomic loci. Binds to DNA tandem repeat sequences in both telomeres and euchromatin and in vitro binds DNA quadruplex structures. May help stabilizing G-rich regions into regular chromatin structures by remodeling G4 DNA and incorporating H3.3-containing nucleosomes. Catalytic component of the chromatin remodeling complex ATRX:DAXX which has ATP-dependent DNA translocase activity and catalyzes the replication-independent deposition of histone H3.3 in pericentric DNA repeats outside S-phase and telomeres, and the in vitro remodeling of H3.3-containing nucleosomes. Its heterochromatin targeting is proposed to involve a combinatorial readout of histone H3 modifications (specifically methylation states of H3K9 and H3K4) and association with CBX5. Involved in maintaining telomere structural integrity in embryonic stem cells probably implying recruitment of CBX5 to telomeres. May be involved in transcriptional regulation of telomeric repeat-containing RNA (TERRA). Acts as a negative regulator of chromatin incorporation of transcriptionally repressive histone MACROH2A1, particularily at telomeres. Participates in the allele-specific gene expression at the imprinted IGF2/H19 gene locus. On the maternal allele, required for the chromatin occupancy of SMC1 and CTCTF within the H19 imprinting control region (ICR) and involved in esatblishment of histone tails modifications in the ICR. Binds to zinc-finger coding genes with atypical chromatin signatures and regulates its H3K9me3 levels. Forms a complex with ZNF274, TRIM28 and SETDB1 to facilitate the deposition and maintenance of H3K9me3 at the 3' exons of zinc-finger genes. This is Transcriptional regulator ATRX (Atrx) from Rattus norvegicus (Rat).